The chain runs to 1402 residues: DNA-directed RNA polymerase subunit beta' (1402 aa).

4 residues coordinate Zn(2+): cysteine 70, cysteine 72, cysteine 85, and cysteine 88. Aspartate 460, aspartate 462, and aspartate 464 together coordinate Mg(2+). Residues cysteine 812, cysteine 886, cysteine 893, and cysteine 896 each coordinate Zn(2+). The tract at residues 1373–1402 (DRFLNGSASSNEKSRSAGVLEATDEESAGD) is disordered.

It belongs to the RNA polymerase beta' chain family. In terms of assembly, the RNAP catalytic core consists of 2 alpha, 1 beta, 1 beta' and 1 omega subunit. When a sigma factor is associated with the core the holoenzyme is formed, which can initiate transcription. Mg(2+) is required as a cofactor. The cofactor is Zn(2+).

The catalysed reaction is RNA(n) + a ribonucleoside 5'-triphosphate = RNA(n+1) + diphosphate. In terms of biological role, DNA-dependent RNA polymerase catalyzes the transcription of DNA into RNA using the four ribonucleoside triphosphates as substrates. This is DNA-directed RNA polymerase subunit beta' from Dichelobacter nodosus (strain VCS1703A).